A 533-amino-acid polypeptide reads, in one-letter code: uncharacterized protein (533 aa).

4 helical membrane-spanning segments follow: residues 1–21 (MLAF…VAFI), 135–155 (LPRF…IAAL), 193–213 (AIAA…AILA), and 472–492 (LLVN…PLVG).

The protein localises to the cell membrane. This is an uncharacterized protein from Mycobacterium bovis (strain ATCC BAA-935 / AF2122/97).